A 187-amino-acid chain; its full sequence is MADTTDFKNGLVLKIDNKLQQIVEFQHVKPGKGPAFVRTKLKDVVSGKVTDKTFNAGVKVETANVDRRDMTYLYNDGQNYVVMDDKTYEQYELPFDKFGDAGKFLLENMRVQVSFHDGEALFGELPISVDLKVEHTEPGLQGDRSNGGTKPATLETGAEIQVPLFIETGNTLKIDTRTGEYLSRVNN.

The protein belongs to the elongation factor P family.

It localises to the cytoplasm. The protein operates within protein biosynthesis; polypeptide chain elongation. Its function is as follows. Involved in peptide bond synthesis. Stimulates efficient translation and peptide-bond synthesis on native or reconstituted 70S ribosomes in vitro. Probably functions indirectly by altering the affinity of the ribosome for aminoacyl-tRNA, thus increasing their reactivity as acceptors for peptidyl transferase. This Corynebacterium aurimucosum (strain ATCC 700975 / DSM 44827 / CIP 107346 / CN-1) (Corynebacterium nigricans) protein is Elongation factor P.